The chain runs to 449 residues: Glutamyl-tRNA reductase (449 aa).

Substrate-binding positions include 58–61, S121, 126–128, and Q132; these read TCNR and ETQ. The active-site Nucleophile is the C59. NADP(+) is bound at residue 203-208; the sequence is GLGEMA.

It belongs to the glutamyl-tRNA reductase family. As to quaternary structure, homodimer.

The catalysed reaction is (S)-4-amino-5-oxopentanoate + tRNA(Glu) + NADP(+) = L-glutamyl-tRNA(Glu) + NADPH + H(+). It participates in porphyrin-containing compound metabolism; protoporphyrin-IX biosynthesis; 5-aminolevulinate from L-glutamyl-tRNA(Glu): step 1/2. Functionally, catalyzes the NADPH-dependent reduction of glutamyl-tRNA(Glu) to glutamate 1-semialdehyde (GSA). This Helicobacter pylori (strain ATCC 700392 / 26695) (Campylobacter pylori) protein is Glutamyl-tRNA reductase.